Here is a 330-residue protein sequence, read N- to C-terminus: Aspartate--ammonia ligase (330 aa).

This sequence belongs to the class-II aminoacyl-tRNA synthetase family. AsnA subfamily.

It localises to the cytoplasm. The catalysed reaction is L-aspartate + NH4(+) + ATP = L-asparagine + AMP + diphosphate + H(+). It functions in the pathway amino-acid biosynthesis; L-asparagine biosynthesis; L-asparagine from L-aspartate (ammonia route): step 1/1. The protein is Aspartate--ammonia ligase of Shigella dysenteriae serotype 1 (strain Sd197).